The sequence spans 454 residues: NADP-specific glutamate dehydrogenase 1 (454 aa).

N-acetylserine is present on Ser2. Residue Lys110 is part of the active site. 174–203 lines the NAD(+) pocket; the sequence is GVLTGKGLNWGGSLIRPEATGYGLVYYTQA. Residues Lys325, Lys371, and Lys433 each participate in a glycyl lysine isopeptide (Lys-Gly) (interchain with G-Cter in ubiquitin) cross-link.

It belongs to the Glu/Leu/Phe/Val dehydrogenases family. As to quaternary structure, homohexamer.

It carries out the reaction L-glutamate + NADP(+) + H2O = 2-oxoglutarate + NH4(+) + NADPH + H(+). Its function is as follows. Catalyzes the incorporation of an ammonium ion into alpha-ketoglutarate to form L-glutamate, the major route of assimilation of ammonia into an organic form in yeast. The sequence is that of NADP-specific glutamate dehydrogenase 1 from Saccharomyces cerevisiae (strain ATCC 204508 / S288c) (Baker's yeast).